Here is a 240-residue protein sequence, read N- to C-terminus: Molybdate/tungstate import ATP-binding protein WtpC (240 aa).

The region spanning 2–227 (FLKVRAEKRL…KNGEVAEFLS (226 aa)) is the ABC transporter domain. ATP is bound at residue 31–38 (GPTGAGKS).

It belongs to the ABC transporter superfamily. Sulfate/tungstate importer (TC 3.A.1.6) family. As to quaternary structure, the complex is composed of two ATP-binding proteins (WtpC), two transmembrane proteins (WtpB) and a solute-binding protein (WtpA).

The protein resides in the cell membrane. The enzyme catalyses tungstate(in) + ATP + H2O = tungstate(out) + ADP + phosphate + H(+). In terms of biological role, part of the ABC transporter complex WtpABC involved in molybdate/tungstate import. Responsible for energy coupling to the transport system. The chain is Molybdate/tungstate import ATP-binding protein WtpC (wtpC) from Archaeoglobus fulgidus (strain ATCC 49558 / DSM 4304 / JCM 9628 / NBRC 100126 / VC-16).